The following is a 554-amino-acid chain: Valerianol synthase TPS1B (554 aa).

Residues Asp307 and Asp311 each contribute to the Mg(2+) site. The DDXXD motif signature appears at 326–330; that stretch reads VQRWD. Residues Asp452, Ser456, and Glu460 each contribute to the Mg(2+) site.

It belongs to the terpene synthase family. Requires Mg(2+) as cofactor.

The catalysed reaction is (2E,6E)-farnesyl diphosphate + H2O = valerianol + diphosphate. It functions in the pathway secondary metabolite biosynthesis; terpenoid biosynthesis. In terms of biological role, terpene synthase that catalyzes the biosynthesis of the terpene valerianol, which is a volatile compound of floral scent. This chain is Valerianol synthase TPS1B, found in Camellia hiemalis (Camellia).